Reading from the N-terminus, the 390-residue chain is Digeranylgeranylglycerophospholipid reductase (390 aa).

FAD is bound by residues Ala18, Glu37, Cys48, Ala49, Ala51, Arg98, Val122, Asp278, Gly290, and Ile291. Val368 contributes to the a 2,3-bis-O-(geranylgeranyl)-sn-glycerol 1-phospholipid binding site.

Belongs to the geranylgeranyl reductase family. DGGGPL reductase subfamily. It depends on FAD as a cofactor.

It carries out the reaction a 2,3-bis-O-phytanyl-sn-glycerol 1-phospholipid + 8 A = a 2,3-bis-O-(geranylgeranyl)-sn-glycerol 1-phospholipid + 8 AH2. The enzyme catalyses 2,3-bis-O-(phytanyl)-sn-glycerol 1-phosphate + 8 A = 2,3-bis-O-(geranylgeranyl)-sn-glycerol 1-phosphate + 8 AH2. The catalysed reaction is CDP-2,3-bis-O-(geranylgeranyl)-sn-glycerol + 8 AH2 = CDP-2,3-bis-O-(phytanyl)-sn-glycerol + 8 A. It catalyses the reaction archaetidylserine + 8 AH2 = 2,3-bis-O-phytanyl-sn-glycero-3-phospho-L-serine + 8 A. It functions in the pathway membrane lipid metabolism; glycerophospholipid metabolism. Functionally, is involved in the reduction of 2,3-digeranylgeranylglycerophospholipids (unsaturated archaeols) into 2,3-diphytanylglycerophospholipids (saturated archaeols) in the biosynthesis of archaeal membrane lipids. Catalyzes the formation of archaetidic acid (2,3-di-O-phytanyl-sn-glyceryl phosphate) from 2,3-di-O-geranylgeranylglyceryl phosphate (DGGGP) via the hydrogenation of each double bond of the isoprenoid chains. Is also probably able to reduce double bonds of geranyl groups in CDP-2,3-bis-O-(geranylgeranyl)-sn-glycerol and archaetidylserine, thus acting at various stages in the biosynthesis of archaeal membrane lipids. The protein is Digeranylgeranylglycerophospholipid reductase of Methanococcus vannielii (strain ATCC 35089 / DSM 1224 / JCM 13029 / OCM 148 / SB).